Consider the following 317-residue polypeptide: Metaxin-1 (317 aa).

Glycyl lysine isopeptide (Lys-Gly) (interchain with G-Cter in ubiquitin) cross-links involve residues lysine 38, lysine 41, and lysine 78. A helical transmembrane segment spans residues 164–184 (EELEKELYREARECLTLLSQR).

This sequence belongs to the metaxin family. As to quaternary structure, interacts with MTX2/metaxin-2. Associates with the mitochondrial contact site and cristae organizing system (MICOS) complex, composed of at least MICOS10/MIC10, CHCHD3/MIC19, CHCHD6/MIC25, APOOL/MIC27, IMMT/MIC60, APOO/MIC23/MIC26 and QIL1/MIC13. This complex was also known under the names MINOS or MitOS complex. The MICOS complex associates with mitochondrial outer membrane proteins SAMM50, MTX1 and MTX2 (together described as components of the mitochondrial outer membrane sorting assembly machinery (SAM) complex) and DNAJC11, mitochondrial inner membrane protein TMEM11 and with HSPA9. The MICOS and SAM complexes together with DNAJC11 are part of a large protein complex spanning both membranes termed the mitochondrial intermembrane space bridging (MIB) complex. Interacts with ARMC1. Ubiquitinated by PRKN during mitophagy, leading to its degradation and enhancement of mitophagy. Deubiquitinated by USP30.

It localises to the mitochondrion outer membrane. Its function is as follows. Involved in transport of proteins into the mitochondrion. Essential for embryonic development. This is Metaxin-1 (MTX1) from Macaca fascicularis (Crab-eating macaque).